A 186-amino-acid polypeptide reads, in one-letter code: MISSNDFRTGTTIELDGAVWRVVEFLHVKPGKGSAFVRTKLKAVQAGNVVEKTFRAGEMVPQALLEKATLQHTYMESGDYVFMDMSTYEETRLTANQIGDSRKYLKEGMEVNVVSWNEKPLEVELPNSVVLEVKETDPGVKGDTATGGTKPAILETGAQIMVPLFISVGEKIKVDTRNDSYLGREN.

It belongs to the elongation factor P family.

It is found in the cytoplasm. The protein operates within protein biosynthesis; polypeptide chain elongation. In terms of biological role, involved in peptide bond synthesis. Stimulates efficient translation and peptide-bond synthesis on native or reconstituted 70S ribosomes in vitro. Probably functions indirectly by altering the affinity of the ribosome for aminoacyl-tRNA, thus increasing their reactivity as acceptors for peptidyl transferase. The chain is Elongation factor P from Prochlorococcus marinus (strain SARG / CCMP1375 / SS120).